Here is a 718-residue protein sequence, read N- to C-terminus: Catalase-peroxidase (718 aa).

The segment at residues 98-219 (WHAAGTYRMG…LAATEMGLIY (122 aa)) is a cross-link (tryptophyl-tyrosyl-methioninium (Trp-Tyr) (with M-245)). The active-site Proton acceptor is the histidine 99. The tryptophyl-tyrosyl-methioninium (Tyr-Met) (with W-98) cross-link spans 219 to 245 (YVNPEGPQASGDPRSAAPFIRATFGNM). A heme b-binding site is contributed by histidine 260.

It belongs to the peroxidase family. Peroxidase/catalase subfamily. Homodimer or homotetramer. Heme b serves as cofactor. In terms of processing, formation of the three residue Trp-Tyr-Met cross-link is important for the catalase, but not the peroxidase activity of the enzyme.

It carries out the reaction H2O2 + AH2 = A + 2 H2O. It catalyses the reaction 2 H2O2 = O2 + 2 H2O. Bifunctional enzyme with both catalase and broad-spectrum peroxidase activity. This chain is Catalase-peroxidase, found in Acinetobacter baumannii (strain AB307-0294).